Here is a 120-residue protein sequence, read N- to C-terminus: Large ribosomal subunit protein uL18 (120 aa).

It belongs to the universal ribosomal protein uL18 family. Part of the 50S ribosomal subunit; part of the 5S rRNA/L5/L18/L25 subcomplex. Contacts the 5S and 23S rRNAs.

Its function is as follows. This is one of the proteins that bind and probably mediate the attachment of the 5S RNA into the large ribosomal subunit, where it forms part of the central protuberance. The polypeptide is Large ribosomal subunit protein uL18 (Bartonella bacilliformis (strain ATCC 35685 / KC583 / Herrer 020/F12,63)).